The primary structure comprises 513 residues: Flagellin A (513 aa).

It belongs to the bacterial flagellin family. As to quaternary structure, heteromer of FlaA and FlaB. FlaB is located proximal to the hook while the remainder of the filament is composed of the predominant FlaA.

It is found in the secreted. The protein resides in the bacterial flagellum. Flagellin is the subunit protein which polymerizes to form the filaments of bacterial flagella. Important for motility and virulence. The chain is Flagellin A (flaA) from Helicobacter felis (strain ATCC 49179 / CCUG 28539 / NCTC 12436 / CS1).